Here is a 688-residue protein sequence, read N- to C-terminus: Acyl-CoA synthetase short-chain family member B, mitochondrial (688 aa).

Belongs to the ATP-dependent AMP-binding enzyme family.

Its subcellular location is the mitochondrion. It carries out the reaction acetate + ATP + CoA = acetyl-CoA + AMP + diphosphate. Its function is as follows. Activates acetate so that it can be used for lipid synthesis or for energy generation. The protein is Acyl-CoA synthetase short-chain family member B, mitochondrial (aslB) of Dictyostelium discoideum (Social amoeba).